The primary structure comprises 74 residues: Cytochrome c oxidase subunit 3 (74 aa).

Transmembrane regions (helical) follow at residues 15–37 (SPWPLTGAIGAMTTVSGMVKWFH) and 42–59 (SLFLLGNIITILTVYQWW).

This sequence belongs to the cytochrome c oxidase subunit 3 family. Component of the cytochrome c oxidase (complex IV, CIV), a multisubunit enzyme composed of a catalytic core of 3 subunits and several supernumerary subunits. The complex exists as a monomer or a dimer and forms supercomplexes (SCs) in the inner mitochondrial membrane with ubiquinol-cytochrome c oxidoreductase (cytochrome b-c1 complex, complex III, CIII).

The protein resides in the mitochondrion inner membrane. The enzyme catalyses 4 Fe(II)-[cytochrome c] + O2 + 8 H(+)(in) = 4 Fe(III)-[cytochrome c] + 2 H2O + 4 H(+)(out). Component of the cytochrome c oxidase, the last enzyme in the mitochondrial electron transport chain which drives oxidative phosphorylation. The respiratory chain contains 3 multisubunit complexes succinate dehydrogenase (complex II, CII), ubiquinol-cytochrome c oxidoreductase (cytochrome b-c1 complex, complex III, CIII) and cytochrome c oxidase (complex IV, CIV), that cooperate to transfer electrons derived from NADH and succinate to molecular oxygen, creating an electrochemical gradient over the inner membrane that drives transmembrane transport and the ATP synthase. Cytochrome c oxidase is the component of the respiratory chain that catalyzes the reduction of oxygen to water. Electrons originating from reduced cytochrome c in the intermembrane space (IMS) are transferred via the dinuclear copper A center (CU(A)) of subunit 2 and heme A of subunit 1 to the active site in subunit 1, a binuclear center (BNC) formed by heme A3 and copper B (CU(B)). The BNC reduces molecular oxygen to 2 water molecules using 4 electrons from cytochrome c in the IMS and 4 protons from the mitochondrial matrix. The polypeptide is Cytochrome c oxidase subunit 3 (mt:CoIII) (Drosophila simulans (Fruit fly)).